Here is a 161-residue protein sequence, read N- to C-terminus: Protein-export protein SecB (161 aa).

This sequence belongs to the SecB family. In terms of assembly, homotetramer, a dimer of dimers. One homotetramer interacts with 1 SecA dimer.

It is found in the cytoplasm. Functionally, one of the proteins required for the normal export of preproteins out of the cell cytoplasm. It is a molecular chaperone that binds to a subset of precursor proteins, maintaining them in a translocation-competent state. It also specifically binds to its receptor SecA. This is Protein-export protein SecB from Bradyrhizobium diazoefficiens (strain JCM 10833 / BCRC 13528 / IAM 13628 / NBRC 14792 / USDA 110).